A 349-amino-acid chain; its full sequence is Very-long-chain 3-oxoacyl-CoA reductase (349 aa).

The helical transmembrane segment at 19–39 (AIIFALLLGVFKLTVFSLKFA) threads the bilayer. NADP(+)-binding residues include Val-65, Asp-119, Asn-146, Tyr-221, Lys-225, Val-254, and Ser-256. Catalysis depends on Tyr-221, which acts as the Proton donor. The Lowers pKa of active site Tyr role is filled by Lys-225.

Belongs to the short-chain dehydrogenases/reductases (SDR) family.

It localises to the endoplasmic reticulum membrane. The enzyme catalyses a very-long-chain (3R)-3-hydroxyacyl-CoA + NADP(+) = a very-long-chain 3-oxoacyl-CoA + NADPH + H(+). The protein operates within lipid metabolism; fatty acid biosynthesis. Its function is as follows. Component of the microsomal membrane bound fatty acid elongation system, which produces the 26-carbon very long-chain fatty acids (VLCFA) from palmitate. Catalyzes the reduction of the 3-ketoacyl-CoA intermediate that is formed in each cycle of fatty acid elongation. VLCFAs serve as precursors for ceramide and sphingolipids. The chain is Very-long-chain 3-oxoacyl-CoA reductase from Candida albicans (strain SC5314 / ATCC MYA-2876) (Yeast).